A 314-amino-acid polypeptide reads, in one-letter code: 4-hydroxy-3-methylbut-2-enyl diphosphate reductase (314 aa).

Cys-12 contacts [4Fe-4S] cluster. Residues His-41 and His-74 each contribute to the (2E)-4-hydroxy-3-methylbut-2-enyl diphosphate site. The dimethylallyl diphosphate site is built by His-41 and His-74. His-41 and His-74 together coordinate isopentenyl diphosphate. Cys-96 contacts [4Fe-4S] cluster. His-124 serves as a coordination point for (2E)-4-hydroxy-3-methylbut-2-enyl diphosphate. Residue His-124 coordinates dimethylallyl diphosphate. Position 124 (His-124) interacts with isopentenyl diphosphate. Residue Glu-126 is the Proton donor of the active site. Thr-167 contacts (2E)-4-hydroxy-3-methylbut-2-enyl diphosphate. [4Fe-4S] cluster is bound at residue Cys-197. 4 residues coordinate (2E)-4-hydroxy-3-methylbut-2-enyl diphosphate: Ser-225, Ser-226, Asn-227, and Ser-269. Residues Ser-225, Ser-226, Asn-227, and Ser-269 each contribute to the dimethylallyl diphosphate site. Isopentenyl diphosphate-binding residues include Ser-225, Ser-226, Asn-227, and Ser-269.

It belongs to the IspH family. It depends on [4Fe-4S] cluster as a cofactor.

It carries out the reaction isopentenyl diphosphate + 2 oxidized [2Fe-2S]-[ferredoxin] + H2O = (2E)-4-hydroxy-3-methylbut-2-enyl diphosphate + 2 reduced [2Fe-2S]-[ferredoxin] + 2 H(+). The enzyme catalyses dimethylallyl diphosphate + 2 oxidized [2Fe-2S]-[ferredoxin] + H2O = (2E)-4-hydroxy-3-methylbut-2-enyl diphosphate + 2 reduced [2Fe-2S]-[ferredoxin] + 2 H(+). It participates in isoprenoid biosynthesis; dimethylallyl diphosphate biosynthesis; dimethylallyl diphosphate from (2E)-4-hydroxy-3-methylbutenyl diphosphate: step 1/1. It functions in the pathway isoprenoid biosynthesis; isopentenyl diphosphate biosynthesis via DXP pathway; isopentenyl diphosphate from 1-deoxy-D-xylulose 5-phosphate: step 6/6. Its function is as follows. Catalyzes the conversion of 1-hydroxy-2-methyl-2-(E)-butenyl 4-diphosphate (HMBPP) into a mixture of isopentenyl diphosphate (IPP) and dimethylallyl diphosphate (DMAPP). Acts in the terminal step of the DOXP/MEP pathway for isoprenoid precursor biosynthesis. The chain is 4-hydroxy-3-methylbut-2-enyl diphosphate reductase from Mannheimia succiniciproducens (strain KCTC 0769BP / MBEL55E).